A 71-amino-acid polypeptide reads, in one-letter code: Augerpeptide-s7a (71 aa).

Positions 1–20 (MSALKFVLICGLVLLLIETI) are cleaved as a signal peptide. Positions 21–29 (PGVSLNLMR) are excised as a propeptide. 3 cysteine pairs are disulfide-bonded: C36–C48, C42–C65, and C47–C68.

As to expression, expressed by the venom duct.

The protein localises to the secreted. Its function is as follows. Elicits an uncoordinated twisting syndrome when injected into C.elegans, but has no effect on mice. The polypeptide is Augerpeptide-s7a (Terebra subulata (Chocolate spotted auger)).